A 733-amino-acid polypeptide reads, in one-letter code: Phosphoribosylformylglycinamidine synthase subunit PurL (733 aa).

The active site involves His-32. Residue Tyr-35 coordinates ATP. Residue Glu-81 participates in Mg(2+) binding. Residues 82 to 85 (SHNH) and Arg-104 contribute to the substrate site. Catalysis depends on His-83, which acts as the Proton acceptor. Asp-105 is a binding site for Mg(2+). Position 230 (Gln-230) interacts with substrate. Asp-258 contributes to the Mg(2+) binding site. 301-303 (ESQ) contacts substrate. The ATP site is built by Asp-482 and Gly-519. Asn-520 is a Mg(2+) binding site. Ser-522 contacts substrate.

The protein belongs to the FGAMS family. As to quaternary structure, monomer. Part of the FGAM synthase complex composed of 1 PurL, 1 PurQ and 2 PurS subunits.

It localises to the cytoplasm. It catalyses the reaction N(2)-formyl-N(1)-(5-phospho-beta-D-ribosyl)glycinamide + L-glutamine + ATP + H2O = 2-formamido-N(1)-(5-O-phospho-beta-D-ribosyl)acetamidine + L-glutamate + ADP + phosphate + H(+). It participates in purine metabolism; IMP biosynthesis via de novo pathway; 5-amino-1-(5-phospho-D-ribosyl)imidazole from N(2)-formyl-N(1)-(5-phospho-D-ribosyl)glycinamide: step 1/2. Its function is as follows. Part of the phosphoribosylformylglycinamidine synthase complex involved in the purines biosynthetic pathway. Catalyzes the ATP-dependent conversion of formylglycinamide ribonucleotide (FGAR) and glutamine to yield formylglycinamidine ribonucleotide (FGAM) and glutamate. The FGAM synthase complex is composed of three subunits. PurQ produces an ammonia molecule by converting glutamine to glutamate. PurL transfers the ammonia molecule to FGAR to form FGAM in an ATP-dependent manner. PurS interacts with PurQ and PurL and is thought to assist in the transfer of the ammonia molecule from PurQ to PurL. This chain is Phosphoribosylformylglycinamidine synthase subunit PurL, found in Methanocaldococcus jannaschii (strain ATCC 43067 / DSM 2661 / JAL-1 / JCM 10045 / NBRC 100440) (Methanococcus jannaschii).